The following is a 470-amino-acid chain: 6-phospho-beta-galactosidase 1 (470 aa).

D-galactose 6-phosphate-binding residues include glutamine 23, histidine 120, asparagine 163, glutamate 164, and asparagine 300. Glutamate 164 functions as the Proton donor in the catalytic mechanism. The Nucleophile role is filled by glutamate 378. Positions 434, 435, 441, and 443 each coordinate D-galactose 6-phosphate.

This sequence belongs to the glycosyl hydrolase 1 family.

The catalysed reaction is a 6-phospho-beta-D-galactoside + H2O = D-galactose 6-phosphate + an alcohol. Its pathway is carbohydrate metabolism; lactose degradation; D-galactose 6-phosphate and beta-D-glucose from lactose 6-phosphate: step 1/1. In Streptococcus pneumoniae serotype 4 (strain ATCC BAA-334 / TIGR4), this protein is 6-phospho-beta-galactosidase 1.